Here is a 287-residue protein sequence, read N- to C-terminus: Glycine--tRNA ligase alpha subunit (287 aa).

Belongs to the class-II aminoacyl-tRNA synthetase family. As to quaternary structure, tetramer of two alpha and two beta subunits.

It is found in the cytoplasm. The enzyme catalyses tRNA(Gly) + glycine + ATP = glycyl-tRNA(Gly) + AMP + diphosphate. This is Glycine--tRNA ligase alpha subunit from Campylobacter jejuni subsp. doylei (strain ATCC BAA-1458 / RM4099 / 269.97).